Consider the following 181-residue polypeptide: ATP-dependent protease subunit HslV (181 aa).

Residue threonine 7 is part of the active site. 3 residues coordinate Na(+): alanine 166, cysteine 169, and threonine 172.

This sequence belongs to the peptidase T1B family. HslV subfamily. A double ring-shaped homohexamer of HslV is capped on each side by a ring-shaped HslU homohexamer. The assembly of the HslU/HslV complex is dependent on binding of ATP.

It is found in the cytoplasm. It catalyses the reaction ATP-dependent cleavage of peptide bonds with broad specificity.. Allosterically activated by HslU binding. Protease subunit of a proteasome-like degradation complex believed to be a general protein degrading machinery. This chain is ATP-dependent protease subunit HslV, found in Anaeromyxobacter dehalogenans (strain 2CP-C).